The sequence spans 325 residues: Formimidoylglutamase (325 aa).

6 residues coordinate Mn(2+): His130, Asp156, His158, Asp160, Cys244, and Asp246.

It belongs to the arginase family. Requires Mn(2+) as cofactor.

It catalyses the reaction N-formimidoyl-L-glutamate + H2O = formamide + L-glutamate. It participates in amino-acid degradation; L-histidine degradation into L-glutamate; L-glutamate from N-formimidoyl-L-glutamate (hydrolase route): step 1/1. Functionally, catalyzes the conversion of N-formimidoyl-L-glutamate to L-glutamate and formamide. The chain is Formimidoylglutamase from Geobacillus sp. (strain WCH70).